A 481-amino-acid chain; its full sequence is F-box protein At1g49360 (481 aa).

The F-box domain occupies 105 to 156 (LKEDLFLPSDLVRLILSRLSFKDNIRSSTVCKAWGDIAASVRVKSRRCWLLY).

This chain is F-box protein At1g49360, found in Arabidopsis thaliana (Mouse-ear cress).